We begin with the raw amino-acid sequence, 390 residues long: Galactokinase (390 aa).

Substrate is bound at residue 33-36; the sequence is EHTD. ATP contacts are provided by residues Ser-67 and 124–130; that span reads GSGLSSS. Residues Ser-130 and Glu-162 each coordinate Mg(2+). The active-site Proton acceptor is the Asp-174. Residue Tyr-224 coordinates substrate.

Belongs to the GHMP kinase family. GalK subfamily.

It is found in the cytoplasm. It catalyses the reaction alpha-D-galactose + ATP = alpha-D-galactose 1-phosphate + ADP + H(+). The protein operates within carbohydrate metabolism; galactose metabolism. In terms of biological role, catalyzes the transfer of the gamma-phosphate of ATP to D-galactose to form alpha-D-galactose-1-phosphate (Gal-1-P). The sequence is that of Galactokinase from Streptococcus suis (strain 05ZYH33).